Consider the following 542-residue polypeptide: Chaperonin GroEL 1 (542 aa).

Residues 29-32, 86-90, Gly415, 479-481, and Asp495 contribute to the ATP site; these read TIGP, DGTTT, and NAA.

Belongs to the chaperonin (HSP60) family. In terms of assembly, forms a cylinder of 14 subunits composed of two heptameric rings stacked back-to-back. Interacts with the co-chaperonin GroES.

It is found in the cytoplasm. It carries out the reaction ATP + H2O + a folded polypeptide = ADP + phosphate + an unfolded polypeptide.. In terms of biological role, together with its co-chaperonin GroES, plays an essential role in assisting protein folding. The GroEL-GroES system forms a nano-cage that allows encapsulation of the non-native substrate proteins and provides a physical environment optimized to promote and accelerate protein folding. The protein is Chaperonin GroEL 1 of Streptomyces avermitilis (strain ATCC 31267 / DSM 46492 / JCM 5070 / NBRC 14893 / NCIMB 12804 / NRRL 8165 / MA-4680).